A 258-amino-acid polypeptide reads, in one-letter code: Phosphate import ATP-binding protein PstB 2 (258 aa).

The 242-residue stretch at 12–253 (IQVRDLNFYY…PRQKQTEDYI (242 aa)) folds into the ABC transporter domain. 44–51 (GPSGCGKS) contributes to the ATP binding site.

Belongs to the ABC transporter superfamily. Phosphate importer (TC 3.A.1.7) family. In terms of assembly, the complex is composed of two ATP-binding proteins (PstB), two transmembrane proteins (PstC and PstA) and a solute-binding protein (PstS).

The protein resides in the cell inner membrane. The catalysed reaction is phosphate(out) + ATP + H2O = ADP + 2 phosphate(in) + H(+). In terms of biological role, part of the ABC transporter complex PstSACB involved in phosphate import. Responsible for energy coupling to the transport system. This Pectobacterium atrosepticum (strain SCRI 1043 / ATCC BAA-672) (Erwinia carotovora subsp. atroseptica) protein is Phosphate import ATP-binding protein PstB 2.